Here is a 173-residue protein sequence, read N- to C-terminus: Small ribosomal subunit protein uS9 (173 aa).

A disordered region spans residues 20 to 53; that stretch reads SYTTESEVPVEGEYTSESVASRFGEPQPAAGLGR.

This sequence belongs to the universal ribosomal protein uS9 family.

In Streptomyces avermitilis (strain ATCC 31267 / DSM 46492 / JCM 5070 / NBRC 14893 / NCIMB 12804 / NRRL 8165 / MA-4680), this protein is Small ribosomal subunit protein uS9.